Reading from the N-terminus, the 854-residue chain is uncharacterized protein (854 aa).

This sequence belongs to the PEP-utilizing enzyme family.

This is an uncharacterized protein from Mycobacterium tuberculosis (strain CDC 1551 / Oshkosh).